Reading from the N-terminus, the 358-residue chain is DNA integrity scanning protein DisA (358 aa).

A DAC domain is found at 6 to 144 (RPTLREAVAR…RGERHVLTDS (139 aa)). ATP contacts are provided by residues G73, L91, and 104 to 108 (TRHRS).

This sequence belongs to the DisA family. Homooctamer. Mg(2+) is required as a cofactor.

The enzyme catalyses 2 ATP = 3',3'-c-di-AMP + 2 diphosphate. Functionally, participates in a DNA-damage check-point. DisA forms globular foci that rapidly scan along the chromosomes searching for lesions. Also has diadenylate cyclase activity, catalyzing the condensation of 2 ATP molecules into cyclic di-AMP (c-di-AMP). c-di-AMP likely acts as a signaling molecule that may couple DNA integrity with a cellular process. The polypeptide is DNA integrity scanning protein DisA (Mycobacterium tuberculosis (strain ATCC 25177 / H37Ra)).